A 491-amino-acid chain; its full sequence is MNAAAEAEFNILLATDSYKVTHYKQYPPNTSKVYSYFECREKKTENSKVRKVKYEETVFYGLQYILNKYLKGKVVTKEKIQEAKEVYREHFQDDVFNERGWNYILEKYDGHLPIEVKAVPEGSVIPRGNVLFTVENTDPECYWLTNWIETILVQSWYPITVATNSREQKKILAKYLLETSGNLDGLEYKLHDFGYRGVSSQETAGIGASAHLVNFKGTDTVAGIALIKKYYGTKDPVPGYSVPAAEHSTITAWGKDHEKDAFEHIVTQFSSVPVSVVSDSYDIYNACEKIWGEDLRHLIVSRSTEAPLIIRPDSGNPLDTVLKVLDILGKKFPVTENSKGYKLLPPYLRVIQGDGVDINTLQEIVEGMKQKKWSIENVSFGSGGALLQKLTRDLLNCSFKCSYVVTNGLGVNVFKDPVADPNKRSKKGRLSLHRTPAGNFVTLEEGKGDLEEYGHDLLHTVFKNGKVTKSYSFDEVRKNAQLNIEQDVAPH.

An N-acetylmethionine modification is found at Met1. Tyr188 carries the phosphotyrosine modification. Arg196 provides a ligand contact to diphosphate. Asp219 lines the beta-nicotinamide D-ribonucleotide pocket. Diphosphate-binding residues include His247 and Arg311. Beta-nicotinamide D-ribonucleotide contacts are provided by residues Arg311–Asp313, Gly353–Asp354, Gly384, and Arg392. Phosphoserine is present on Ser472.

It belongs to the NAPRTase family. As to quaternary structure, homodimer. Ubiquitously expressed in lymphoid and non-lymphoid tissues.

It is found in the nucleus. The protein resides in the cytoplasm. The protein localises to the secreted. It carries out the reaction beta-nicotinamide D-ribonucleotide + diphosphate = 5-phospho-alpha-D-ribose 1-diphosphate + nicotinamide + H(+). It participates in cofactor biosynthesis; NAD(+) biosynthesis; nicotinamide D-ribonucleotide from 5-phospho-alpha-D-ribose 1-diphosphate and nicotinamide: step 1/1. Functionally, the secreted form behaves both as a cytokine with immunomodulating properties and an adipokine with anti-diabetic properties, it has no enzymatic activity, partly because of lack of activation by ATP, which has a low level in extracellular space and plasma. Catalyzes the condensation of nicotinamide with 5-phosphoribosyl-1-pyrophosphate to yield nicotinamide mononucleotide, an intermediate in the biosynthesis of NAD. It is the rate limiting component in the mammalian NAD biosynthesis pathway. Plays a role in the modulation of circadian clock function. NAMPT-dependent oscillatory production of NAD regulates oscillation of clock target gene expression by releasing the core clock component: CLOCK-BMAL1 heterodimer from NAD-dependent SIRT1-mediated suppression. The protein is Nicotinamide phosphoribosyltransferase (Nampt) of Mus musculus (Mouse).